The chain runs to 86 residues: Large ribosomal subunit protein bL27 (86 aa).

The interval 1–23 (MAHKKGTGSTRNGRDSNSKRLGV) is disordered.

Belongs to the bacterial ribosomal protein bL27 family.

This Prochlorococcus marinus (strain MIT 9515) protein is Large ribosomal subunit protein bL27.